The primary structure comprises 333 residues: Complement C1q and tumor necrosis factor-related protein 9A (333 aa).

The N-terminal stretch at Met1 to Ser19 is a signal peptide. Collagen-like domains follow at residues Arg24–Val82, Gly95–Met154, and Gly155–Gly191. Residues Arg24–Gly188 form a disordered region. Positions Gly26–Pro40 are enriched in low complexity. 4-hydroxyproline occurs at positions 31, 34, and 40. Basic and acidic residues predominate over residues Arg42–Glu57. Pro58, Pro61, and Pro64 each carry 4-hydroxyproline. Basic and acidic residues predominate over residues Thr69–Lys88. 2 positions are modified to 5-hydroxylysine: Lys73 and Lys127. O-linked (Gal...) hydroxylysine glycans are attached at residues Lys73 and Lys127. 4-hydroxyproline occurs at positions 151, 160, and 175. Residues Leu197–Pro333 enclose the C1q domain.

In terms of assembly, multimers (predominantly trimers). Interacts with ADIPOQ via the C1q domain to form a heterotrimeric complex. Interacts with CTRP9B. Forms heterotrimers and heterooligomeric complexes with CTRP9B. Expressed predominantly in adipose tissue.

The protein localises to the secreted. Its function is as follows. Probable adipokine. Activates AMPK, AKT, and p44/42 MAPK signaling pathways. This chain is Complement C1q and tumor necrosis factor-related protein 9A (C1QTNF9), found in Homo sapiens (Human).